We begin with the raw amino-acid sequence, 268 residues long: Magnesium dechelatase SGR1, chloroplastic (268 aa).

The transit peptide at 1–48 (MCSLSAIMLLPTKLKPAYSDKRSNSSSSSSLFFNNRRSKKKNQSIVPV) directs the protein to the chloroplast.

The protein belongs to the staygreen family. Interacts with HCAR, the chlorophyll catabolic enzymes (CCEs) NYC1, PAO and RCCR, and the LHCII complex. Part of a SGR1-CCE-LHCII complex, which acts in chlorophyll breakdown. As to expression, expressed in roots, leaves, seeds, flowers, buds, petals, sepals and siliques.

Its subcellular location is the plastid. The protein localises to the chloroplast thylakoid membrane. The catalysed reaction is chlorophyll a + 2 H(+) = pheophytin a + Mg(2+). Its function is as follows. Magnesium chelatase involved in chlorophyll a degradation in the chlorophyll-protein complexes of photosystem I (PSI) and photosystem II (PSII). Contributes to the degradation of PSI and PSII in the thylakoid membranes. Required to trigger chlorophyll degradation during natural and dark-induced leaf senescence. Mediates chlorophyll degradation during embryo degreening. Recombinant SGR1 possesses high dechelating activity against chlorophyll a, very low activity against chlorophyllide a, and no activity against chlorophyll b. Magnesium dechelation of chlorophyll a by SGR1 activates chlorophyll b degradation by inducing the expression of NYC1, an enzyme involved in chlorophyll b degradation. The polypeptide is Magnesium dechelatase SGR1, chloroplastic (Arabidopsis thaliana (Mouse-ear cress)).